A 584-amino-acid polypeptide reads, in one-letter code: uncharacterized protein (584 aa).

Over residues Asn-353 to Ala-375 the composition is skewed to polar residues. Disordered regions lie at residues Asn-353 to Glu-379, Leu-400 to His-426, and Ser-463 to Gly-565. Residues Lys-502–Leu-511 show a composition bias toward polar residues. Positions Asp-516–Ala-535 are enriched in basic and acidic residues.

This is an uncharacterized protein from Mus musculus (Mouse).